Here is a 470-residue protein sequence, read N- to C-terminus: MFTFAAFSALLISLAGVVAQTTGTSVDSSILTKTADSTGPSGFSIPALSELTSGAPTDSTVALYSTFAAGATPTVSGAPVLPTSALTIADYPALDVTPPTNSSLVKDWMAKIDLSKVPSYNVTTGDCSTDAAAISDGRCWWTCGGCTRETDIVECPDKNVWGLSYDDGPSPFTPLLIDYLQEKNIKTTFFVVGSRVLSRPEMLQTEYMSGHQISIHTWSHPALTTLTNEEIVAELGWTMKVIKDTLGVTPNTFRPPYGDIDDRVRAIAAQMGLTPVIWTSYTDGSTTVNFDTNDWHISGGTATGASSYETFEKILTEYAPKLDTGFITLEHDIYQQSVDLAVGYILPQVLANGTYQLKSIINCLGKDTSEAYIETSSNQTTTQITAATGSQSTFFQPIVGTATGAEVSAPSEATGSTAAGSAASTTSGSGASASTGAASNTSSSGSGRSATMGGALIALAAVAVGMVYVA.

Positions 1 to 19 are cleaved as a signal peptide; sequence MFTFAAFSALLISLAGVVA. N101 and N121 each carry an N-linked (GlcNAc...) asparagine glycan. The cysteines at positions 155 and 363 are disulfide-linked. The 200-residue stretch at 159–358 folds into the NodB homology domain; it reads NVWGLSYDDG…VLANGTYQLK (200 aa). D166 (proton acceptor) is an active-site residue. Residue D166 participates in acetate binding. Co(2+) contacts are provided by D167, H216, and H220. Y257 provides a ligand contact to acetate. H331 acts as the Proton donor in catalysis. N-linked (GlcNAc...) asparagine glycosylation is found at N352, N378, and N440. A disordered region spans residues 406–447; the sequence is EVSAPSEATGSTAAGSAASTTSGSGASASTGAASNTSSSGSG. The span at 408–447 shows a compositional bias: low complexity; the sequence is SAPSEATGSTAAGSAASTTSGSGASASTGAASNTSSSGSG. A lipid anchor (GPI-anchor amidated serine) is attached at S444. A propeptide spans 445-470 (removed in mature form); the sequence is GSGRSATMGGALIALAAVAVGMVYVA.

The protein belongs to the polysaccharide deacetylase family. It depends on Co(2+) as a cofactor.

Its subcellular location is the secreted. The protein localises to the cell wall. The protein resides in the cell membrane. It catalyses the reaction [(1-&gt;4)-N-acetyl-beta-D-glucosaminyl](n) + n H2O = chitosan + n acetate. Functionally, hydrolyzes the N-acetamido groups of N-acetyl-D-glucosamine residues in chitin to form chitosan and acetate. Chitosan is required to anchor melanin to the cell wall, for maintenance of cell wall integrity, and for proper cytokinesis. Plays a major role in synthesizing cell wall chitosan during host infection; chitosan offers an advantage during infection as it is less readily detected than chitin by host immunosurveillance mechanisms. The polypeptide is Chitin deacetylase 1 (Cryptococcus neoformans var. grubii serotype A (strain H99 / ATCC 208821 / CBS 10515 / FGSC 9487) (Filobasidiella neoformans var. grubii)).